The sequence spans 220 residues: 5-hmdU DNA kinase 1 (220 aa).

The protein belongs to the thymidylate kinase family. 5-hmdU DNA kinase subfamily.

It carries out the reaction 5-hydroxymethyl-dUMP in DNA + ATP = 5-phosphomethyl-dUMP in DNA + ADP + H(+). In terms of biological role, phosphorylates 5-hydroxymethyluracil (5hmdU) into 5-phosphomethyl-2'-deoxyuridine (5- PmdU) on DNA as a step in the pathway leading to thymidine hypermodifications in the viral genome. The phosphate is added internally to the DNA polymer. As a final result of the pathway of hypermodification, 5-aminoethoxy-2'-deoxymethyluridine (5-NeOmdU) substitutes for about 40% of the thymidines in the viral DNA. These modifications probably prevent degradation of viral genome by the host restriction-modification antiviral defense system. The chain is 5-hmdU DNA kinase 1 from Salmonella phage ViI.